Here is a 398-residue protein sequence, read N- to C-terminus: RNA-binding protein rnc1 (398 aa).

The interval 40-78 (KVSIPTPKPSTPLSTLTNGSTIQQSMTNQPEPTSQVPPI) is disordered. T50 carries the post-translational modification Phosphothreonine. The segment covering 57 to 76 (NGSTIQQSMTNQPEPTSQVP) has biased composition (polar residues). 2 consecutive KH domains span residues 93–157 (QLTL…YRFI) and 178–243 (PRKL…IWEI). Residues 274–290 (ASTASPQQVSPPAAPST) show a composition bias toward low complexity. Positions 274–295 (ASTASPQQVSPPAAPSTTSGEA) are disordered. The 66-residue stretch at 320-385 (KVTQNISIPA…EENEKALFLL (66 aa)) folds into the KH 3 domain.

Post-translationally, phosphorylated by pmk1. Phosphorylation causes enhancement of the RNA-binding activity.

The protein localises to the cytoplasm. In terms of biological role, binds and stabilizes pmp1 mRNA and hence acts as a negative regulator of pmk1 signaling. Overexpression suppresses the Cl(-) sensitivity of calcineurin deletion. The sequence is that of RNA-binding protein rnc1 from Schizosaccharomyces pombe (strain 972 / ATCC 24843) (Fission yeast).